A 314-amino-acid polypeptide reads, in one-letter code: Target of rapamycin complex subunit wat1 (314 aa).

WD repeat units lie at residues 1–35 (MSVQYPPQHSVLLVSSGYDHTIRFWEALSGICSRT), 38–76 (HADSQVNRLCISPDKKFLAAAGNPHVRLYDINTSSQMPL), 81–120 (GHTNNVTAIAFHCDGKWLATSSEDGTVKVWDMRAPSVQRN), 122–161 (DHKSPVNDLLIHPNQGELLSCDQSGRVRAWDLGENSCTHE), 165–204 (EEDVPMSSITVGSDGSMLIAGNNKGNCYVWRMLNHQGASL), 213–252 (AHQRYITRCVLSPDVKHLATCSADATVNIWSTEDMSFMLE), and 257–296 (GHQRWVWDCAFSADSTYLVTASSDHVARLWELSSGETIRQ). Serine 141 bears the Phosphoserine mark.

It belongs to the WD repeat LST8 family. As to quaternary structure, the target of rapamycin complex 1 (TORC1) is composed of at least mip1, pop3/wat1, tco89, toc1 and tor2. The target of rapamycin complex 2 (TORC2) is composed of at least bit61, pop3/wat1, sin1, ste20 and tor1. Interacts with prp2.

It localises to the cytoplasm. The protein resides in the nucleus. Its function is as follows. component of both TORC1 and TORC2, which regulate multiple cellular processes to control cell growth in response to environmental signals. Nutrient limitation and environmental stress signals cause inactivation of TORC1. Active TORC1 positively controls cell growth and ribosome biogenesis by regulating ribosomal protein gene expression. TORC1 negatively controls G1 cell-cycle arrest, sexual development and amino acid uptake. Represses mating, meiosis and sporulation efficiency by interfering with the functions of the transcription factor ste11 and the meiosis-promoting RNA-binding protein mei2. TORC2 is required for cell survival under various stress conditions. TORC2 positively controls G1 cell-cycle arrest, sexual development and amino acid uptake. Positively regulates amino acid uptake through the control of expression of amino acid permeases. May play a role in mRNA maturation as a coupling protein between splicing and synthesis and/or stabilization. The polypeptide is Target of rapamycin complex subunit wat1 (Schizosaccharomyces pombe (strain 972 / ATCC 24843) (Fission yeast)).